Consider the following 476-residue polypeptide: Hyaluronidase-2 (476 aa).

A signal peptide spans 1–20 (MWTGLGPAVTLALVLVVAWA). 2 cysteine pairs are disulfide-bonded: Cys47-Cys343 and Cys214-Cys230. 2 N-linked (GlcNAc...) asparagine glycosylation sites follow: Asn77 and Asn106. Glu138 (proton donor) is an active-site residue. N-linked (GlcNAc...) asparagine glycans are attached at residues Asn340 and Asn360. The 79-residue stretch at 364–442 (AAQYCSWAQC…YLGWGGEQCQ (79 aa)) folds into the EGF-like domain. 3 disulfide bridges follow: Cys368–Cys379, Cys373–Cys430, and Cys432–Cys441. A lipid anchor (GPI-anchor amidated glycine) is attached at Gly451. Positions 452-476 (ASGAWAGSHLTGLLAVAVLAFTWTS) are cleaved as a propeptide — removed in mature form.

Belongs to the glycosyl hydrolase 56 family. As to quaternary structure, interacts with MST1R. (Microbial infection) Interacts with Jaagsiekte sheep retrovirus (JSRV) envelope proteins.

It is found in the cell membrane. It carries out the reaction Random hydrolysis of (1-&gt;4)-linkages between N-acetyl-beta-D-glucosamine and D-glucuronate residues in hyaluronate.. Functionally, catalyzes hyaluronan degradation into small fragments that are endocytosed and degraded in lysosomes by HYAL1 and exoglycosidases. Essential for the breakdown of extracellular matrix hyaluronan. The sequence is that of Hyaluronidase-2 (HYAL2) from Ovis aries (Sheep).